Here is a 281-residue protein sequence, read N- to C-terminus: MEMO1 family protein APE_1771 (281 aa).

It belongs to the MEMO1 family.

This chain is MEMO1 family protein APE_1771, found in Aeropyrum pernix (strain ATCC 700893 / DSM 11879 / JCM 9820 / NBRC 100138 / K1).